The chain runs to 755 residues: Sentrin-specific protease 5 (755 aa).

Positions 269–329 (QKVTGDHQET…NSHVPDGHTK (61 aa)) are disordered. Positions 272–283 (TGDHQETLRENG) are enriched in basic and acidic residues. Residues 563 to 724 (FYNKHMLDMD…VFVLQYCKCL (162 aa)) are protease. Catalysis depends on residues histidine 646, aspartate 663, and cysteine 713.

Belongs to the peptidase C48 family. Interacts with CCAR2.

The protein resides in the nucleus. It is found in the nucleolus. Protease that catalyzes two essential functions in the SUMO pathway: processing of full-length SUMO3 to its mature form and deconjugation of SUMO2 and SUMO3 from targeted proteins. Has weak proteolytic activity against full-length SUMO1 or SUMO1 conjugates. Required for cell division. The protein is Sentrin-specific protease 5 (SENP5) of Macaca fascicularis (Crab-eating macaque).